The sequence spans 165 residues: Probable DNA polymerase III subunit chi (165 aa).

The protein belongs to the DNA polymerase III chi/HolC chain family. As to quaternary structure, DNA polymerase III contains a core (composed of alpha, epsilon and theta chains) that associates with a tau subunit. This core dimerizes to form the POLIII' complex. PolIII' associates with the gamma complex (composed of gamma, delta, delta', psi and chi chains) and with the beta chain to form the complete DNA polymerase III complex. Interacts directly with the psi subunit (holD). The only subunit of the DNA polymerase III holoenzyme known to interact with single-stranded DNA binding protein (SSB).

It catalyses the reaction DNA(n) + a 2'-deoxyribonucleoside 5'-triphosphate = DNA(n+1) + diphosphate. Its function is as follows. Part of the beta sliding clamp loading complex, which hydrolyzes ATP to load the beta clamp onto primed DNA to form the DNA replication pre-initiation complex. DNA polymerase III is a complex, multichain enzyme responsible for most of the replicative synthesis in bacteria. This DNA polymerase also exhibits 3' to 5' exonuclease activity. In Rickettsia prowazekii (strain Madrid E), this protein is Probable DNA polymerase III subunit chi.